The following is a 275-amino-acid chain: Subtilisin (275 aa).

Residue Gln-2 participates in Ca(2+) binding. Residues 5-274 (PYGISQIKAP…KGLINVQAAA (270 aa)) enclose the Peptidase S8 domain. Catalysis depends on Asp-32, which acts as the Charge relay system. Asp-41 lines the Ca(2+) pocket. His-64 serves as the catalytic Charge relay system. Residues Leu-75, Asn-77, Ile-79, Val-81, Ala-169, Tyr-171, and Thr-174 each coordinate Ca(2+). Ser-221 serves as the catalytic Charge relay system.

This sequence belongs to the peptidase S8 family. Requires Ca(2+) as cofactor.

It localises to the secreted. The catalysed reaction is Hydrolysis of proteins with broad specificity for peptide bonds, and a preference for a large uncharged residue in P1. Hydrolyzes peptide amides.. Subtilisin is an extracellular alkaline serine protease, it catalyzes the hydrolysis of proteins and peptide amides. In Bacillus pumilus (Bacillus mesentericus), this protein is Subtilisin (apr).